A 445-amino-acid chain; its full sequence is GTPase Der (445 aa).

2 consecutive EngA-type G domains span residues 2–166 and 182–355; these read FRVA…PEYE and IKVA…NQAW. Residues 8 to 15, 55 to 59, 118 to 121, 188 to 195, 235 to 239, and 300 to 303 contribute to the GTP site; these read GIPNVGKS, DTGGY, NKID, GKPNAGKS, and DTAGM. The KH-like domain maps to 356 to 440; sequence KRVGTGQLNR…PIKLIFRGKE (85 aa).

This sequence belongs to the TRAFAC class TrmE-Era-EngA-EngB-Septin-like GTPase superfamily. EngA (Der) GTPase family. Associates with the 50S ribosomal subunit.

Functionally, GTPase that plays an essential role in the late steps of ribosome biogenesis. The protein is GTPase Der of Sulfurihydrogenibium sp. (strain YO3AOP1).